Reading from the N-terminus, the 359-residue chain is 4-hydroxy-3-methylbut-2-en-1-yl diphosphate synthase (flavodoxin) (359 aa).

Positions 264, 267, 299, and 306 each coordinate [4Fe-4S] cluster.

It belongs to the IspG family. [4Fe-4S] cluster serves as cofactor.

The enzyme catalyses (2E)-4-hydroxy-3-methylbut-2-enyl diphosphate + oxidized [flavodoxin] + H2O + 2 H(+) = 2-C-methyl-D-erythritol 2,4-cyclic diphosphate + reduced [flavodoxin]. It functions in the pathway isoprenoid biosynthesis; isopentenyl diphosphate biosynthesis via DXP pathway; isopentenyl diphosphate from 1-deoxy-D-xylulose 5-phosphate: step 5/6. Functionally, converts 2C-methyl-D-erythritol 2,4-cyclodiphosphate (ME-2,4cPP) into 1-hydroxy-2-methyl-2-(E)-butenyl 4-diphosphate. This chain is 4-hydroxy-3-methylbut-2-en-1-yl diphosphate synthase (flavodoxin), found in Helicobacter pylori (strain J99 / ATCC 700824) (Campylobacter pylori J99).